Reading from the N-terminus, the 207-residue chain is Glutathione S-transferase 4 (207 aa).

The 78-residue stretch at 2–79 folds into the GST N-terminal domain; sequence PNYKLLYFDA…YLARKFGLAG (78 aa). Residues Y8, W39, K43, 49-51, and 63-64 contribute to the glutathione site; these read GQL and QS. The GST C-terminal domain maps to 81–207; that stretch reads TAEEEAYADS…YVATRKDSIV (127 aa).

This sequence belongs to the GST superfamily. Sigma family.

The enzyme catalyses RX + glutathione = an S-substituted glutathione + a halide anion + H(+). In terms of biological role, conjugation of reduced glutathione to a wide number of exogenous and endogenous hydrophobic electrophiles. May play a role in the detoxification of reactive oxygen species produced during pathogenic bacterial infection. This chain is Glutathione S-transferase 4, found in Caenorhabditis elegans.